The chain runs to 397 residues: Lipoyl synthase 2, chloroplastic (397 aa).

A chloroplast-targeting transit peptide spans 1 to 35 (MIEQSLSKPSFSLSIPIPKAPKSKSSFFCSYSKIR). Residues 49-85 (AKHPQNSTTINNGSSSSASVDLKNNEKGPYPYPGGGK) are disordered. Residues 54–67 (NSTTINNGSSSSAS) are compositionally biased toward low complexity. [4Fe-4S] cluster contacts are provided by Cys128, Cys133, Cys139, Cys159, Cys163, Cys166, and Ser374. A Radical SAM core domain is found at 142–363 (GGGDGIATAT…KEYGESIGFR (222 aa)).

This sequence belongs to the radical SAM superfamily. Lipoyl synthase family. It depends on [4Fe-4S] cluster as a cofactor.

It localises to the plastid. Its subcellular location is the chloroplast. The enzyme catalyses [[Fe-S] cluster scaffold protein carrying a second [4Fe-4S](2+) cluster] + N(6)-octanoyl-L-lysyl-[protein] + 2 oxidized [2Fe-2S]-[ferredoxin] + 2 S-adenosyl-L-methionine + 4 H(+) = [[Fe-S] cluster scaffold protein] + N(6)-[(R)-dihydrolipoyl]-L-lysyl-[protein] + 4 Fe(3+) + 2 hydrogen sulfide + 2 5'-deoxyadenosine + 2 L-methionine + 2 reduced [2Fe-2S]-[ferredoxin]. It functions in the pathway protein modification; protein lipoylation via endogenous pathway; protein N(6)-(lipoyl)lysine from octanoyl-[acyl-carrier-protein]: step 2/2. In terms of biological role, catalyzes the radical-mediated insertion of two sulfur atoms into the C-6 and C-8 positions of the octanoyl moiety bound to the lipoyl domains of lipoate-dependent enzymes, thereby converting the octanoylated domains into lipoylated derivatives. In Populus trichocarpa (Western balsam poplar), this protein is Lipoyl synthase 2, chloroplastic.